Reading from the N-terminus, the 461-residue chain is GTPase Der (461 aa).

EngA-type G domains lie at 2-164 (QSII…NENF) and 197-369 (IKVG…ANFT). GTP contacts are provided by residues 8–15 (GKPNVGKS), 55–59 (DSGGL), 116–119 (NKID), 203–210 (GRVNVGKS), 250–254 (DTAGI), and 314–317 (NKWD). The KH-like domain occupies 370–454 (QKIPTAKLNA…PLIIVSRKKG (85 aa)).

This sequence belongs to the TRAFAC class TrmE-Era-EngA-EngB-Septin-like GTPase superfamily. EngA (Der) GTPase family. As to quaternary structure, associates with the 50S ribosomal subunit.

In terms of biological role, GTPase that plays an essential role in the late steps of ribosome biogenesis. In Campylobacter lari (strain RM2100 / D67 / ATCC BAA-1060), this protein is GTPase Der.